The sequence spans 802 residues: Endoplasmin (802 aa).

The first 21 residues, 1-21 (MRVLWVLGLCCVLLTFGFVRA), serve as a signal peptide directing secretion. Residues 42–44 (SRT) carry the SRT pseudosubstrate motif motif. A glycan (N-linked (GlcNAc...) asparagine) is linked at N62. The residue at position 64 (S64) is a Phosphoserine. N107 is a glycosylation site (N-linked (GlcNAc...) asparagine). N107, D149, and N162 together coordinate ATP. An N6-(2-hydroxyisobutyryl)lysine modification is found at K168. S172 carries the post-translational modification Phosphoserine. F199 contacts ATP. Residue N217 is glycosylated (N-linked (GlcNAc...) asparagine). The span at 290 to 317 (EEPLEEDEAAKEEKEESDDEAAVEEEEE) shows a compositional bias: acidic residues. The segment at 290 to 323 (EEPLEEDEAAKEEKEESDDEAAVEEEEEEKKPKT) is disordered. A phosphoserine mark is found at S306 and S403. K404 carries the N6-succinyllysine modification. N-linked (GlcNAc...) asparagine glycosylation is present at N445. S447 bears the Phosphoserine mark. K479 carries the post-translational modification N6-acetyllysine. N481 and N502 each carry an N-linked (GlcNAc...) asparagine glycan. K633 is modified (N6-succinyllysine). The disordered stretch occupies residues 749–802 (IDPEAQVEEEPEEEPEDTSEDAEDSEQDEGEEMDAGTEEEEEETEKESTEKDEL). Over residues 753-793 (AQVEEEPEEEPEDTSEDAEDSEQDEGEEMDAGTEEEEEETE) the composition is skewed to acidic residues. Phosphothreonine is present on T785. A Prevents secretion from ER motif is present at residues 799-802 (KDEL).

It belongs to the heat shock protein 90 family. As to quaternary structure, homodimer; disulfide-linked. Component of an EIF2 complex at least composed of CELF1/CUGBP1, CALR, CALR3, EIF2S1, EIF2S2, HSP90B1 and HSPA5. Part of a large chaperone multiprotein complex comprising DNAJB11, HSP90B1, HSPA5, HYOU, PDIA2, PDIA4, PDIA6, PPIB, SDF2L1, UGGT1 and very small amounts of ERP29, but not, or at very low levels, CALR nor CANX. Hyperglycosylated form interacts with OS9; promoting its degradation by the endoplasmic reticulum associated degradation (ERAD). Interacts with AIMP1; regulates its retention in the endoplasmic reticulum. Interacts with CNPY3; this interaction is disrupted in the presence of ATP. Interacts with TLR4, TLR9 and TLR11, but not with TLR3. Interacts with MZB1 in a calcium-dependent manner. Interacts with METTL23. Interacts with IL1B; the interaction facilitates cargo translocation into the ERGIC. Interacts with EIF2AK3. In terms of processing, phosphorylated by CK2. Post-translationally, N-glycosylated cotranslationally at Asn-217 by STT3A-containing OST-A complex: this glycosylation is constitutive. In response to various stress, 5 additional facultative sites (Asn-62, Asn-107, Asn-445, Asn-481 and Asn-502) can be glycosylated post-translationally by STT3B-containing OST-B complex, leading to a hyperglycosylated form that is degraded by the ER-associated degradation (ERAD) pathway. In normal conditions, the OST-A complex together with CCDC134 prevent glycosylation at facultative sites during protein folding, thereby preventing hyperglycosylation. Mechanistically, nascent HSP90B1 is tethered during translation to a specialized CCDC134-containing translocon that forms a microenvironment for its folding, in which STT3A associates with the SRT pseudosubstrate motif, and prevents access to facultative glycosylation sites until folding is completed, rendering its facultative sites inaccessible to the OST-B complex.

It localises to the endoplasmic reticulum lumen. Its subcellular location is the sarcoplasmic reticulum lumen. The protein resides in the melanosome. It carries out the reaction ATP + H2O = ADP + phosphate + H(+). Its function is as follows. ATP-dependent chaperone involved in the processing of proteins in the endoplasmic reticulum, regulating their transport. Together with MESD, acts as a modulator of the Wnt pathway by promoting the folding of LRP6, a coreceptor of the canonical Wnt pathway. When associated with CNPY3, required for proper folding of Toll-like receptors. Promotes folding and trafficking of TLR4 to the cell surface. May participate in the unfolding of cytosolic leaderless cargos (lacking the secretion signal sequence) such as the interleukin 1/IL-1 to facilitate their translocation into the ERGIC (endoplasmic reticulum-Golgi intermediate compartment) and secretion; the translocation process is mediated by the cargo receptor TMED10. The sequence is that of Endoplasmin (Hsp90b1) from Mus musculus (Mouse).